Here is a 179-residue protein sequence, read N- to C-terminus: Crossover junction endodeoxyribonuclease RuvC (179 aa).

Residues D12, E72, and D144 contribute to the active site. Residues D12, E72, and D144 each coordinate Mg(2+).

It belongs to the RuvC family. As to quaternary structure, homodimer which binds Holliday junction (HJ) DNA. The HJ becomes 2-fold symmetrical on binding to RuvC with unstacked arms; it has a different conformation from HJ DNA in complex with RuvA. In the full resolvosome a probable DNA-RuvA(4)-RuvB(12)-RuvC(2) complex forms which resolves the HJ. The cofactor is Mg(2+).

Its subcellular location is the cytoplasm. The enzyme catalyses Endonucleolytic cleavage at a junction such as a reciprocal single-stranded crossover between two homologous DNA duplexes (Holliday junction).. Functionally, the RuvA-RuvB-RuvC complex processes Holliday junction (HJ) DNA during genetic recombination and DNA repair. Endonuclease that resolves HJ intermediates. Cleaves cruciform DNA by making single-stranded nicks across the HJ at symmetrical positions within the homologous arms, yielding a 5'-phosphate and a 3'-hydroxyl group; requires a central core of homology in the junction. The consensus cleavage sequence is 5'-(A/T)TT(C/G)-3'. Cleavage occurs on the 3'-side of the TT dinucleotide at the point of strand exchange. HJ branch migration catalyzed by RuvA-RuvB allows RuvC to scan DNA until it finds its consensus sequence, where it cleaves and resolves the cruciform DNA. The sequence is that of Crossover junction endodeoxyribonuclease RuvC from Dechloromonas aromatica (strain RCB).